We begin with the raw amino-acid sequence, 604 residues long: Matrix metalloproteinase-21 (604 aa).

The N-terminal stretch at methionine 1–serine 22 is a signal peptide. The propeptide occupies glutamate 23–arginine 180. The interval lysine 132–lysine 175 is disordered. Residues proline 133–asparagine 140 carry the Cysteine switch motif. A Zn(2+)-binding site is contributed by cysteine 135. N-linked (GlcNAc...) asparagine glycosylation is found at asparagine 158 and asparagine 165. Histidine 318 contacts Zn(2+). Glutamate 319 is a catalytic residue. Residues histidine 322 and histidine 328 each coordinate Zn(2+). Cysteine 364 and cysteine 595 are disulfide-bonded. 4 Hemopexin repeats span residues glutamate 365–isoleucine 424, valine 426–isoleucine 482, proline 483–valine 531, and lysine 538–isoleucine 594. N-linked (GlcNAc...) asparagine glycans are attached at residues asparagine 404 and asparagine 407.

The protein belongs to the peptidase M10A family. Zn(2+) is required as a cofactor. Ca(2+) serves as cofactor. Post-translationally, the precursor is cleaved by a furin endopeptidase.

The protein resides in the secreted. Its function is as follows. Plays a specialized role in the generation of left-right asymmetry during embryogenesis. May act as a negative regulator of the NOTCH-signaling pathway. The sequence is that of Matrix metalloproteinase-21 (mmp21) from Xenopus laevis (African clawed frog).